We begin with the raw amino-acid sequence, 136 residues long: Urease subunit beta (136 aa).

Residues 113–136 are disordered; it reads NDEYAGVFGDNGAENVNKKGRKRS.

Belongs to the urease beta subunit family. Heterotrimer of UreA (gamma), UreB (beta) and UreC (alpha) subunits. Three heterotrimers associate to form the active enzyme.

It is found in the cytoplasm. It carries out the reaction urea + 2 H2O + H(+) = hydrogencarbonate + 2 NH4(+). The protein operates within nitrogen metabolism; urea degradation; CO(2) and NH(3) from urea (urease route): step 1/1. The sequence is that of Urease subunit beta from Staphylococcus aureus (strain Newman).